We begin with the raw amino-acid sequence, 277 residues long: MEYQHWLREAISQLQASESPRRDAEILLEHVTGRGRTFILAFGETQLTDEQCQQLDALLTRRRDGEPIAHLTGVREFWSLPLFVSPATLIPRPDTECLVEQALARLPEQPCRILDLGTGTGAIALALASERPDCEIIAVDRMPDAVSLAQRNAQHLAIKNIHILQSDWFSALAGQQFAMIVSNPPYIDEQDPHLQQGDVRFEPLTALVAADSGMADIVHIIEQSRNALVSGGFLLLEHGWQQGEAVRQAFILAGYHDVETCRDYGDNERVTLGRYYQ.

S-adenosyl-L-methionine is bound by residues 117-121, Asp140, Trp168, and Asn183; that span reads GTGTG. 183–186 provides a ligand contact to substrate; the sequence is NPPY.

Belongs to the protein N5-glutamine methyltransferase family. PrmC subfamily.

It catalyses the reaction L-glutaminyl-[peptide chain release factor] + S-adenosyl-L-methionine = N(5)-methyl-L-glutaminyl-[peptide chain release factor] + S-adenosyl-L-homocysteine + H(+). In terms of biological role, methylates the class 1 translation termination release factors RF1/PrfA and RF2/PrfB on the glutamine residue of the universally conserved GGQ motif. This is Release factor glutamine methyltransferase from Shigella flexneri.